We begin with the raw amino-acid sequence, 314 residues long: NADH-ubiquinone oxidoreductase chain 2 (314 aa).

The next 9 helical transmembrane spans lie at 13-35 (LGVMLIGTILSVSSEELVGVWLG), 61-80 (YFVVQSTGSILMLVGFVSLM), 85-107 (VSGLVMSTAXTVLKSGVFPLHSW), 117-139 (WLASGLMLTWQKVAPLVFLSMIL), 144-166 (LWVVIVSMAGIGAVGGLNQNSVR), 189-209 (VVFVGYFAVYSLSVGLFFYGC), 224-244 (AASGMGLLMLMGMPPFLGFLA), 246-266 (VLVFLMSGSPVIVACIMGSVI), and 294-314 (IWSLVICMNIMGGALILVSFI).

Belongs to the complex I subunit 2 family.

The protein resides in the mitochondrion inner membrane. It catalyses the reaction a ubiquinone + NADH + 5 H(+)(in) = a ubiquinol + NAD(+) + 4 H(+)(out). In terms of biological role, core subunit of the mitochondrial membrane respiratory chain NADH dehydrogenase (Complex I) that is believed to belong to the minimal assembly required for catalysis. Complex I functions in the transfer of electrons from NADH to the respiratory chain. The immediate electron acceptor for the enzyme is believed to be ubiquinone. This is NADH-ubiquinone oxidoreductase chain 2 (ND2) from Mytilus edulis (Blue mussel).